The sequence spans 347 residues: Isopentenyl-diphosphate delta-isomerase (347 aa).

9 to 10 (RK) lines the substrate pocket. FMN-binding positions include Ser-67, 68 to 70 (SMT), Ser-98, and Asn-127. Residue 98 to 100 (SQR) participates in substrate binding. Residue Gln-162 coordinates substrate. Glu-163 contributes to the Mg(2+) binding site. FMN-binding positions include Lys-194, Thr-224, 274 to 276 (GIR), and 295 to 296 (AA).

Belongs to the IPP isomerase type 2 family. Homooctamer. Dimer of tetramers. It depends on FMN as a cofactor. NADPH is required as a cofactor. Mg(2+) serves as cofactor.

It localises to the cytoplasm. It carries out the reaction isopentenyl diphosphate = dimethylallyl diphosphate. Functionally, involved in the biosynthesis of isoprenoids. Catalyzes the 1,3-allylic rearrangement of the homoallylic substrate isopentenyl (IPP) to its allylic isomer, dimethylallyl diphosphate (DMAPP). In Cronobacter sakazakii (strain ATCC BAA-894) (Enterobacter sakazakii), this protein is Isopentenyl-diphosphate delta-isomerase.